Consider the following 101-residue polypeptide: Small ribosomal subunit protein uS14 (101 aa).

It belongs to the universal ribosomal protein uS14 family. As to quaternary structure, part of the 30S ribosomal subunit. Contacts proteins S3 and S10.

In terms of biological role, binds 16S rRNA, required for the assembly of 30S particles and may also be responsible for determining the conformation of the 16S rRNA at the A site. This is Small ribosomal subunit protein uS14 from Escherichia coli O139:H28 (strain E24377A / ETEC).